The chain runs to 143 residues: Transcriptional regulator SlyA (143 aa).

The HTH marR-type domain occupies 2–135; that stretch reads ESTLGSDLSR…LTNLVERLEQ (134 aa). A DNA-binding region (H-T-H motif) is located at residues 49–72; that stretch reads QIQLAKAIGIEQPSLVRTLDQLED.

Belongs to the SlyA family. As to quaternary structure, homodimer.

Its function is as follows. Transcription regulator that can specifically activate or repress expression of target genes. This chain is Transcriptional regulator SlyA, found in Edwardsiella tarda.